Consider the following 133-residue polypeptide: Oocytes ribonuclease (133 aa).

The signal sequence occupies residues M1–S22. Q23 carries the pyrrolidone carboxylic acid modification. The active-site Proton acceptor is H32. 4 disulfide bridges follow: C41–C93, C56–C103, C74–C118, and C115–C132. K57–T61 is a binding site for substrate. H125 (proton donor) is an active-site residue.

This sequence belongs to the pancreatic ribonuclease family. As to quaternary structure, monomer.

It is found in the secreted. Functionally, preferentially cleaves single-stranded RNA at pyrimidine residues with a 3'flanking guanine. Hydrolyzes poly(U) and poly(C) as substrates, and prefers the former. The S-lectins in frog eggs may be involved in the fertilization and development of the frog embryo. This lectin agglutinates various animal cells, including normal lymphocytes, erythrocytes, and fibroblasts of animal and human origin. It is cytotoxic against several tumor cells. The chain is Oocytes ribonuclease (RCR) from Aquarana catesbeiana (American bullfrog).